The primary structure comprises 208 residues: 3-demethoxyubiquinol 3-hydroxylase (208 aa).

Fe cation-binding residues include Glu57, Glu87, His90, Glu139, Glu171, and His174.

This sequence belongs to the COQ7 family. It depends on Fe cation as a cofactor.

It is found in the cell membrane. It catalyses the reaction a 5-methoxy-2-methyl-3-(all-trans-polyprenyl)benzene-1,4-diol + AH2 + O2 = a 3-demethylubiquinol + A + H2O. Its pathway is cofactor biosynthesis; ubiquinone biosynthesis. Catalyzes the hydroxylation of 2-nonaprenyl-3-methyl-6-methoxy-1,4-benzoquinol during ubiquinone biosynthesis. The chain is 3-demethoxyubiquinol 3-hydroxylase from Nitrosospira multiformis (strain ATCC 25196 / NCIMB 11849 / C 71).